Consider the following 349-residue polypeptide: Homeobox-leucine zipper protein HOX7 (349 aa).

The segment at 42–186 (RATRRDEQDD…PKQKSDLANR (145 aa)) is disordered. 2 stretches are compositionally biased toward polar residues: residues 89-99 (SAETGSANSEM) and 121-135 (SSPS…RQQV). A DNA-binding region (homeobox) is located at residues 150–209 (GARKKLRLSKEQSSFLEDSFKEHSTLTPKQKSDLANRLNLRPRQVEVWFQNRRARTKLKQ). A compositionally biased stretch (basic and acidic residues) spans 167–183 (DSFKEHSTLTPKQKSDL). The tract at residues 208–252 (KQTEVDCEHLKRCCERLTRENRRLQREVAELRGALRTTTSSYPPL) is leucine-zipper.

It belongs to the HD-ZIP homeobox family. Class II subfamily. In terms of assembly, homodimer. May form a heterodimer with HOX1, HOX2 or HOX3. In terms of tissue distribution, expressed in seedlings, roots, leaves, nodes, internodes, flowers and embryo.

The protein resides in the nucleus. Its function is as follows. Probable transcription factor that binds to the DNA sequence 5'-CAAT[GC]ATTG-3'. The protein is Homeobox-leucine zipper protein HOX7 (HOX7) of Oryza sativa subsp. indica (Rice).